A 357-amino-acid chain; its full sequence is Alanine racemase (357 aa).

Lysine 33 (proton acceptor; specific for D-alanine) is an active-site residue. Lysine 33 carries the post-translational modification N6-(pyridoxal phosphate)lysine. Position 130 (arginine 130) interacts with substrate. The Proton acceptor; specific for L-alanine role is filled by tyrosine 252. Methionine 300 serves as a coordination point for substrate.

It belongs to the alanine racemase family. Pyridoxal 5'-phosphate serves as cofactor.

It carries out the reaction L-alanine = D-alanine. It functions in the pathway amino-acid biosynthesis; D-alanine biosynthesis; D-alanine from L-alanine: step 1/1. Functionally, catalyzes the interconversion of L-alanine and D-alanine. May also act on other amino acids. The polypeptide is Alanine racemase (alr) (Acidiphilium cryptum (strain JF-5)).